The following is a 288-amino-acid chain: MSIEFKNVDYIYAPGTPFQTQGLTNISFKIRSGSFVAIAGHTGSGKSTLMQHFDGLLLPSKGSVTIADKSITSNTSSKSLKEIRKKVGLVFQFPESQLFEETVLKDVMFGPLNFGFSEQKAKEQAIQWIRKVGLSEQVMNKSPFELSGGQMRRVAIAGVMAYEPDILCLDEPAAGLDPEGQKQMFDIFKNYQREGHTVILISHNMDDISQYADDMLVLEHGHLIKHASPKEVFSDPDWLKKHFLDEPATSKFARKLEKGGFQFSEMPLTVDSLVNEITTKLKSKGGNE.

The 243-residue stretch at 3–245 (IEFKNVDYIY…PDWLKKHFLD (243 aa)) folds into the ABC transporter domain. 40–47 (GHTGSGKS) contacts ATP.

The protein belongs to the ABC transporter superfamily. Energy-coupling factor EcfA family. Forms a stable energy-coupling factor (ECF) transporter complex composed of 2 membrane-embedded substrate-binding proteins (S component), 2 ATP-binding proteins (A component) and 2 transmembrane proteins (T component).

It is found in the cell membrane. ATP-binding (A) component of a common energy-coupling factor (ECF) ABC-transporter complex. Unlike classic ABC transporters this ECF transporter provides the energy necessary to transport a number of different substrates. The sequence is that of Energy-coupling factor transporter ATP-binding protein EcfA2 from Lactobacillus gasseri (strain ATCC 33323 / DSM 20243 / BCRC 14619 / CIP 102991 / JCM 1131 / KCTC 3163 / NCIMB 11718 / NCTC 13722 / AM63).